The sequence spans 1771 residues: Atrochrysone carboxylic acid synthase (1771 aa).

Residues H38–H269 are N-terminal acylcarrier protein transacylase domain (SAT). In terms of domain architecture, Ketosynthase family 3 (KS3) spans Q402–E836. Active-site for beta-ketoacyl synthase activity residues include C575, H711, and H754. Positions F937–E1257 are malonyl-CoA:ACP transacylase (MAT) domain. The interval T1322 to P1641 is product template (PT) domain. The tract at residues Q1326–E1461 is N-terminal hotdog fold. The 311-residue stretch at Q1326–N1636 folds into the PKS/mFAS DH domain. The active-site Proton acceptor; for dehydratase activity is the H1358. Positions I1488–N1636 are C-terminal hotdog fold. D1547 serves as the catalytic Proton donor; for dehydratase activity. The segment covering A1668–T1681 has biased composition (low complexity). The disordered stretch occupies residues A1668–S1695. The region spanning V1693 to Y1770 is the Carrier domain. S1730 is modified (O-(pantetheine 4'-phosphoryl)serine).

The enzyme catalyses holo-[ACP] + 8 malonyl-CoA + 8 H(+) = atrochrysone carboxyl-[ACP] + 8 CO2 + 8 CoA + 2 H2O. It functions in the pathway secondary metabolite biosynthesis. Functionally, non-reducing polyketide synthase; part of the gene cluster that mediates the biosynthesis of geodin, an intermediate in the biosynthesis of other natural products. The pathway begins with the synthesis of atrochrysone thioester by the polyketide synthase (PKS) gedC. The atrochrysone carboxyl ACP thioesterase gedB then breaks the thioester bond and releases the atrochrysone carboxylic acid from gedC. The atrochrysone carboxylic acid is then converted to atrochrysone which is further transformed into emodinanthrone. The next step is performed by the emodinanthrone oxygenase gedH that catalyzes the oxidation of emodinanthrone to emodin. Emodin O-methyltransferase encoded probably by gedA then catalyzes methylation of the 8-hydroxy group of emodin to form questin. Ring cleavage of questin by questin oxidase gedK leads to desmethylsulochrin via several intermediates including questin epoxide. Another methylation step probably catalyzed by methyltransferase gedG leads to the formation of sulochrin which is further converted to dihydrogeodin by the sulochrin halogenase gedL. Finally, the dihydrogeodin oxidase gedJ catalyzes the stereospecific phenol oxidative coupling reaction converting dihydrogeodin to geodin. This is Atrochrysone carboxylic acid synthase from Aspergillus terreus (strain NIH 2624 / FGSC A1156).